We begin with the raw amino-acid sequence, 343 residues long: tRNA N6-adenosine threonylcarbamoyltransferase (343 aa).

Positions 116 and 120 each coordinate Fe cation. Substrate is bound by residues 139–143 (TVSGG), Asp172, Gly185, Asp189, and Asn280. Fe cation is bound at residue Asp308.

Belongs to the KAE1 / TsaD family. It depends on Fe(2+) as a cofactor.

It is found in the cytoplasm. It carries out the reaction L-threonylcarbamoyladenylate + adenosine(37) in tRNA = N(6)-L-threonylcarbamoyladenosine(37) in tRNA + AMP + H(+). In terms of biological role, required for the formation of a threonylcarbamoyl group on adenosine at position 37 (t(6)A37) in tRNAs that read codons beginning with adenine. Is involved in the transfer of the threonylcarbamoyl moiety of threonylcarbamoyl-AMP (TC-AMP) to the N6 group of A37, together with TsaE and TsaB. TsaD likely plays a direct catalytic role in this reaction. The sequence is that of tRNA N6-adenosine threonylcarbamoyltransferase from Cytophaga hutchinsonii (strain ATCC 33406 / DSM 1761 / CIP 103989 / NBRC 15051 / NCIMB 9469 / D465).